A 361-amino-acid polypeptide reads, in one-letter code: Holliday junction branch migration complex subunit RuvB (361 aa).

2 stretches are compositionally biased toward polar residues: residues 1–15 (MAIK…SPNV) and 28–40 (ERST…QQEA). Residues 1 to 41 (MAIKRSGNNNLSPNVKSDLLSPEVIPQERSTSPELEQQEAS) are disordered. The tract at residues 13–203 (PNVKSDLLSP…FGLIQRLRFY (191 aa)) is large ATPase domain (RuvB-L). ATP contacts are provided by residues leucine 42, arginine 43, glycine 84, lysine 87, threonine 88, threonine 89, 150–152 (EDF), arginine 193, tyrosine 203, and arginine 240. Threonine 88 serves as a coordination point for Mg(2+). The segment at 204–274 (EVDELQQIIL…LASEALDLYQ (71 aa)) is small ATPAse domain (RuvB-S). Residues 277–361 (KRGLDWTDRL…PTPLLPWKES (85 aa)) form a head domain (RuvB-H) region. DNA contacts are provided by arginine 332 and arginine 337.

It belongs to the RuvB family. As to quaternary structure, homohexamer. Forms an RuvA(8)-RuvB(12)-Holliday junction (HJ) complex. HJ DNA is sandwiched between 2 RuvA tetramers; dsDNA enters through RuvA and exits via RuvB. An RuvB hexamer assembles on each DNA strand where it exits the tetramer. Each RuvB hexamer is contacted by two RuvA subunits (via domain III) on 2 adjacent RuvB subunits; this complex drives branch migration. In the full resolvosome a probable DNA-RuvA(4)-RuvB(12)-RuvC(2) complex forms which resolves the HJ.

It is found in the cytoplasm. It catalyses the reaction ATP + H2O = ADP + phosphate + H(+). Functionally, the RuvA-RuvB-RuvC complex processes Holliday junction (HJ) DNA during genetic recombination and DNA repair, while the RuvA-RuvB complex plays an important role in the rescue of blocked DNA replication forks via replication fork reversal (RFR). RuvA specifically binds to HJ cruciform DNA, conferring on it an open structure. The RuvB hexamer acts as an ATP-dependent pump, pulling dsDNA into and through the RuvAB complex. RuvB forms 2 homohexamers on either side of HJ DNA bound by 1 or 2 RuvA tetramers; 4 subunits per hexamer contact DNA at a time. Coordinated motions by a converter formed by DNA-disengaged RuvB subunits stimulates ATP hydrolysis and nucleotide exchange. Immobilization of the converter enables RuvB to convert the ATP-contained energy into a lever motion, pulling 2 nucleotides of DNA out of the RuvA tetramer per ATP hydrolyzed, thus driving DNA branch migration. The RuvB motors rotate together with the DNA substrate, which together with the progressing nucleotide cycle form the mechanistic basis for DNA recombination by continuous HJ branch migration. Branch migration allows RuvC to scan DNA until it finds its consensus sequence, where it cleaves and resolves cruciform DNA. Its function is as follows. Participates in UV-tolerance of Synechocystis PCC 6803. The polypeptide is Holliday junction branch migration complex subunit RuvB (Synechocystis sp. (strain ATCC 27184 / PCC 6803 / Kazusa)).